A 124-amino-acid polypeptide reads, in one-letter code: Large-conductance mechanosensitive channel (124 aa).

3 consecutive transmembrane segments (helical) span residues 14–34 (VIDL…VQSL), 37–57 (NLIN…NLVF), and 67–87 (GSFI…FLIV).

The protein belongs to the MscL family. As to quaternary structure, homopentamer.

The protein resides in the cell membrane. Its function is as follows. Channel that opens in response to stretch forces in the membrane lipid bilayer. May participate in the regulation of osmotic pressure changes within the cell. This Lactobacillus acidophilus (strain ATCC 700396 / NCK56 / N2 / NCFM) protein is Large-conductance mechanosensitive channel.